The sequence spans 305 residues: D-alanine--D-alanine ligase (305 aa).

Residues 107–299 form the ATP-grasp domain; the sequence is KKMLCYHGIA…FDELVERILA (193 aa). 134–186 serves as a coordination point for ATP; sequence PDYPLVVKPAREGSTIGISIVHDEQELAAGLEEAFRHDDLVLVEQFIAGAEVT. Asp-254, Glu-266, and Asn-268 together coordinate Mg(2+).

This sequence belongs to the D-alanine--D-alanine ligase family. Mg(2+) serves as cofactor. The cofactor is Mn(2+).

The protein localises to the cytoplasm. It catalyses the reaction 2 D-alanine + ATP = D-alanyl-D-alanine + ADP + phosphate + H(+). Its pathway is cell wall biogenesis; peptidoglycan biosynthesis. Functionally, cell wall formation. This chain is D-alanine--D-alanine ligase, found in Syntrophotalea carbinolica (strain DSM 2380 / NBRC 103641 / GraBd1) (Pelobacter carbinolicus).